Consider the following 219-residue polypeptide: Ribose-5-phosphate isomerase A (219 aa).

Substrate-binding positions include 28-31, 81-84, and 94-97; these read SGST, DGAD, and KGGG. Catalysis depends on glutamate 103, which acts as the Proton acceptor. Residue lysine 121 coordinates substrate.

It belongs to the ribose 5-phosphate isomerase family. In terms of assembly, homodimer.

It carries out the reaction aldehydo-D-ribose 5-phosphate = D-ribulose 5-phosphate. It participates in carbohydrate degradation; pentose phosphate pathway; D-ribose 5-phosphate from D-ribulose 5-phosphate (non-oxidative stage): step 1/1. Catalyzes the reversible conversion of ribose-5-phosphate to ribulose 5-phosphate. This Haemophilus influenzae (strain PittEE) protein is Ribose-5-phosphate isomerase A.